Here is a 21-residue protein sequence, read N- to C-terminus: Protein YadW (21 aa).

This Escherichia coli (strain K12) protein is Protein YadW.